We begin with the raw amino-acid sequence, 160 residues long: Calsequestrin-2 (160 aa).

It belongs to the calsequestrin family. In terms of assembly, monomer, homodimer and homooligomer. Mostly monomeric in the absence of calcium. Forms higher oligomers in a calcium-dependent manner. Dimers associate to form tetramers, that then form linear homomer chains. Interacts with ASPH and TRDN. In terms of processing, phosphorylation in the C-terminus, probably by CK2, moderately increases calcium buffering capacity. N-glycosylated.

It is found in the sarcoplasmic reticulum lumen. In terms of biological role, calsequestrin is a high-capacity, moderate affinity, calcium-binding protein and thus acts as an internal calcium store in muscle. Calcium ions are bound by clusters of acidic residues at the protein surface, especially at the interface between subunits. Can bind around 60 Ca(2+) ions. Regulates the release of lumenal Ca(2+) via the calcium release channel RYR2; this plays an important role in triggering muscle contraction. Plays a role in excitation-contraction coupling in the heart and in regulating the rate of heart beats. The sequence is that of Calsequestrin-2 (CASQ2) from Sus scrofa (Pig).